The sequence spans 348 residues: 4-hydroxy-3-methylbut-2-enyl diphosphate reductase (348 aa).

Residue Cys-21 coordinates [4Fe-4S] cluster. Positions 50 and 86 each coordinate (2E)-4-hydroxy-3-methylbut-2-enyl diphosphate. Dimethylallyl diphosphate-binding residues include His-50 and His-86. Isopentenyl diphosphate is bound by residues His-50 and His-86. Cys-108 contacts [4Fe-4S] cluster. His-136 contacts (2E)-4-hydroxy-3-methylbut-2-enyl diphosphate. His-136 contacts dimethylallyl diphosphate. Residue His-136 coordinates isopentenyl diphosphate. Glu-138 serves as the catalytic Proton donor. Thr-177 contributes to the (2E)-4-hydroxy-3-methylbut-2-enyl diphosphate binding site. Residue Cys-207 participates in [4Fe-4S] cluster binding. 4 residues coordinate (2E)-4-hydroxy-3-methylbut-2-enyl diphosphate: Ser-235, Ser-236, Asn-237, and Ser-280. Positions 235, 236, 237, and 280 each coordinate dimethylallyl diphosphate. Residues Ser-235, Ser-236, Asn-237, and Ser-280 each contribute to the isopentenyl diphosphate site.

Belongs to the IspH family. It depends on [4Fe-4S] cluster as a cofactor.

It catalyses the reaction isopentenyl diphosphate + 2 oxidized [2Fe-2S]-[ferredoxin] + H2O = (2E)-4-hydroxy-3-methylbut-2-enyl diphosphate + 2 reduced [2Fe-2S]-[ferredoxin] + 2 H(+). It carries out the reaction dimethylallyl diphosphate + 2 oxidized [2Fe-2S]-[ferredoxin] + H2O = (2E)-4-hydroxy-3-methylbut-2-enyl diphosphate + 2 reduced [2Fe-2S]-[ferredoxin] + 2 H(+). The protein operates within isoprenoid biosynthesis; dimethylallyl diphosphate biosynthesis; dimethylallyl diphosphate from (2E)-4-hydroxy-3-methylbutenyl diphosphate: step 1/1. Its pathway is isoprenoid biosynthesis; isopentenyl diphosphate biosynthesis via DXP pathway; isopentenyl diphosphate from 1-deoxy-D-xylulose 5-phosphate: step 6/6. In terms of biological role, catalyzes the conversion of 1-hydroxy-2-methyl-2-(E)-butenyl 4-diphosphate (HMBPP) into a mixture of isopentenyl diphosphate (IPP) and dimethylallyl diphosphate (DMAPP). Acts in the terminal step of the DOXP/MEP pathway for isoprenoid precursor biosynthesis. The sequence is that of 4-hydroxy-3-methylbut-2-enyl diphosphate reductase from Agrobacterium fabrum (strain C58 / ATCC 33970) (Agrobacterium tumefaciens (strain C58)).